A 658-amino-acid chain; its full sequence is Protein translocase subunit SecA 3 (658 aa).

ATP is bound by residues Q111, 129–133 (GEGKT), and D536.

This sequence belongs to the SecA family. In terms of assembly, monomer and homodimer. Part of the essential Sec protein translocation apparatus which comprises SecA, SecYEG and auxiliary proteins SecDF-YajC and YidC.

It is found in the cell inner membrane. The protein resides in the cytoplasm. It catalyses the reaction ATP + H2O + cellular proteinSide 1 = ADP + phosphate + cellular proteinSide 2.. Part of the Sec protein translocase complex. Interacts with the SecYEG preprotein conducting channel. Has a central role in coupling the hydrolysis of ATP to the transfer of proteins into and across the cell membrane, serving both as a receptor for the preprotein-SecB complex and as an ATP-driven molecular motor driving the stepwise translocation of polypeptide chains across the membrane. In Magnetococcus marinus (strain ATCC BAA-1437 / JCM 17883 / MC-1), this protein is Protein translocase subunit SecA 3.